Consider the following 343-residue polypeptide: L-threonine 3-dehydrogenase (343 aa).

C38 serves as a coordination point for Zn(2+). Catalysis depends on charge relay system residues T40 and H43. Zn(2+) is bound by residues H63, E64, C93, C96, C99, and C107. Residues I175, D195, R200, 262–264, and 286–287 contribute to the NAD(+) site; these read LGI and IY.

Belongs to the zinc-containing alcohol dehydrogenase family. Homotetramer. It depends on Zn(2+) as a cofactor.

Its subcellular location is the cytoplasm. The enzyme catalyses L-threonine + NAD(+) = (2S)-2-amino-3-oxobutanoate + NADH + H(+). The protein operates within amino-acid degradation; L-threonine degradation via oxydo-reductase pathway; glycine from L-threonine: step 1/2. Functionally, catalyzes the NAD(+)-dependent oxidation of L-threonine to 2-amino-3-ketobutyrate. The polypeptide is L-threonine 3-dehydrogenase (Burkholderia thailandensis (strain ATCC 700388 / DSM 13276 / CCUG 48851 / CIP 106301 / E264)).